The following is a 459-amino-acid chain: Ribulose bisphosphate carboxylase large chain (459 aa).

Lys4 bears the N6,N6,N6-trimethyllysine mark. Residues Asn113 and Thr163 each contribute to the substrate site. Lys165 acts as the Proton acceptor in catalysis. Residue Lys167 coordinates substrate. Residues Lys191, Asp193, and Glu194 each contribute to the Mg(2+) site. Lys191 bears the N6-carboxylysine mark. The active-site Proton acceptor is His284. Residues Arg285, His317, and Ser369 each contribute to the substrate site.

It belongs to the RuBisCO large chain family. Type I subfamily. As to quaternary structure, heterohexadecamer of 8 large chains and 8 small chains; disulfide-linked. The disulfide link is formed within the large subunit homodimers. Requires Mg(2+) as cofactor. Post-translationally, the disulfide bond which can form in the large chain dimeric partners within the hexadecamer appears to be associated with oxidative stress and protein turnover.

It is found in the plastid. The protein localises to the chloroplast. The catalysed reaction is 2 (2R)-3-phosphoglycerate + 2 H(+) = D-ribulose 1,5-bisphosphate + CO2 + H2O. It carries out the reaction D-ribulose 1,5-bisphosphate + O2 = 2-phosphoglycolate + (2R)-3-phosphoglycerate + 2 H(+). In terms of biological role, ruBisCO catalyzes two reactions: the carboxylation of D-ribulose 1,5-bisphosphate, the primary event in carbon dioxide fixation, as well as the oxidative fragmentation of the pentose substrate in the photorespiration process. Both reactions occur simultaneously and in competition at the same active site. This chain is Ribulose bisphosphate carboxylase large chain, found in Geum quellyon (Chilean avens).